The chain runs to 517 residues: Maturase K (517 aa).

It belongs to the intron maturase 2 family. MatK subfamily.

The protein localises to the plastid. Its subcellular location is the chloroplast. Usually encoded in the trnK tRNA gene intron. Probably assists in splicing its own and other chloroplast group II introns. The protein is Maturase K of Dracula chimaera.